We begin with the raw amino-acid sequence, 426 residues long: UPF0229 protein YeaH (426 aa).

The segment covering 78–92 (GNDHFIQNDRIERPQ) has biased composition (basic and acidic residues). Residues 78–108 (GNDHFIQNDRIERPQDGGGSGSGNGQASQDG) are disordered.

Belongs to the UPF0229 family.

This is UPF0229 protein YeaH from Salmonella arizonae (strain ATCC BAA-731 / CDC346-86 / RSK2980).